The chain runs to 871 residues: MGFSAHEIRELFLSFFEKKGHTRVKSAPLVPENDPTLLFVNAGMVPFKNVFLGLEKRPYKRATSCQKCLRVSGKHNDLEQVGYTSRHHTFFEMLGNFSFGDYFKKEAIEYAWEFVTEVLKLPKERLYVSVYKDDEEAYRIWNEHIGIPSERIWRLGEEDNFWQMGDTGPCGPSSEIYVDRGEEYEGEERYLEIWNLVFMQYNRDENGVLTPLPHPNIDTGMGLERIASVLQGKNSNFEIDIIYPLIEFGEEVSGKKYGEKFETDVALRVIADHLRAITFAISDGVIPSNEGRGYVIRRILRRAMRFGYQLGITEPFLYKGIDLVVDIMKEPYPELELSRDFVKGIVKGEEERFIRTLRSGMEYIQEVIEKALSEGRKTLTGKEVFTAYDTYGFPVDLIQEIAKEKGLEIDLEGFQCELEEQRERARKSFKIETKEVKPVYAHLKELGITSRFVGYEHLEYETEVLGIIVGDEIVSEIKEGEEGEIILRETPFYPEGGGQIGDSGIIETDKGIFKVEDTQRPTEGIIVHIGKLLKGKISVKDIVHARVDKERRWDIMRNHTATHLLHAALRNLLGEHVRQAGSLVADKYLRFDFTHFSPLTEEEIKRIEELVNEKIRENLPVSVMEMAYQEALQTGAIAIFEEKYGERVRVISCGEFSKELCGGTHVSATGDIGYFKIISESSVGAGVRRIVAQTGRWAVNTAFEEHTTLKKVSNALGVKEDEVVQKVEELKEEIKEKEKEIQKLRQEILKLQIREKVKEERHRELTLYYGVFEDVEPEELRNLADILRQRTGKDVVFIASKKEGKINFVIASSKGISKEVRANELIRQVGKVLKGGGGGREDLAQGGGKAPDKFDESVKLLKELLSGVSVG.

Positions 559, 563, 661, and 665 each coordinate Zn(2+).

It belongs to the class-II aminoacyl-tRNA synthetase family. Zn(2+) serves as cofactor.

It is found in the cytoplasm. The enzyme catalyses tRNA(Ala) + L-alanine + ATP = L-alanyl-tRNA(Ala) + AMP + diphosphate. Its function is as follows. Catalyzes the attachment of alanine to tRNA(Ala) in a two-step reaction: alanine is first activated by ATP to form Ala-AMP and then transferred to the acceptor end of tRNA(Ala). Also edits incorrectly charged Ser-tRNA(Ala) and Gly-tRNA(Ala) via its editing domain. The protein is Alanine--tRNA ligase of Aquifex pyrophilus.